A 223-amino-acid polypeptide reads, in one-letter code: uncharacterized protein (223 aa).

An N-terminal signal peptide occupies residues 1–22 (MHLKKALCPALCTFLIHLCLHA). Residues 30 to 204 (DIFLMIDKSR…RSIAAAHSKR (175 aa)) form the VWFA domain. Residues 199 to 223 (AAHSKRPTPTPPAKESSPRYTPSLD) form a disordered region.

This is an uncharacterized protein from Treponema pallidum (strain Nichols).